The following is a 492-amino-acid chain: MMGAKVVTGRSTTQGLAQQHGGVSNVVETPFNQASCCGPVSWTSGCHSLTESRCSRLLYILLHVGASAICCLLLSKTVVERVWGKAHGIQMPSVLCAHLFGSSDCPVLSGSGAVYRVCAGTATFHLLQAVLLVRLHSPTNPRAQLHNSFWSLKLLFLLGLCVVAFCIPDEDLFPAWHYIGICGGFTFILLQLVLITAFAQSWNKNWQTGAAQDCSWLLGVSLATLGFYSMAGVGAVLLFHQYTHPDGCLLNKMLLSLHLCFCGLLSLLSIAPCIRRKQPNSGLLQASIISCYIMYLTFSALSSRPPETITFQGQNHTLCLPGRNKMEPQIPDTSVAVFSAGIMYACVLFACNEASYLAELFGPLWIIKVYKYEFQKPSVCFCCPQTVEPEDGQRSRARSADQETPPAAQVQSQHLSYSYSGFHFAFFLASLYVMVTLTNWFSYEEAELEKTFTKGSWATFWVKVASCWACVLLYLGLLLAPLLAPHSESPPP.

10 helical membrane-spanning segments follow: residues 59-79 (YILLHVGASAICCLLLSKTVV), 113-133 (AVYRVCAGTATFHLLQAVLLV), 148-168 (SFWSLKLLFLLGLCVVAFCIP), 179-199 (IGICGGFTFILLQLVLITAFA), 219-239 (GVSLATLGFYSMAGVGAVLLF), 254-274 (LLSLHLCFCGLLSLLSIAPCI), 281-301 (SGLLQASIISCYIMYLTFSAL), 330-350 (IPDTSVAVFSAGIMYACVLFA), 421-441 (GFHFAFFLASLYVMVTLTNWF), and 464-484 (VASCWACVLLYLGLLLAPLLA).

It belongs to the TDE1 family.

The protein resides in the membrane. Its function is as follows. Incorporates a polar amino acid serine into membranes and facilitates the synthesis of two serine-derived lipids, phosphatidylserine and sphingolipids. The chain is Serine incorporator 4 (Serinc4) from Mus musculus (Mouse).